The following is a 386-amino-acid chain: MATTIKSRFPLLLLLGIIFLASVVSVTYANYDEGSEPRVPAQRERGRQEGEKEEKRHGEWRPSYEKEEDEEEGQRERGRQEGEKEEKRHGEWGPSYEKQEDEEEKQKYRYQREKEDEEEKQKYQYQREKKEQKEVQPGRERWEREEDEEQVDEEWRGSQRREDPEERARLRHREERTKRDRRHQREGEEEERSSESQERRNPFLFKSNKFLTLFENENGHIRLLQRFDKRSDLFENLQNYRLVEYRAKPHTIFLPQHIDADLILVVLSGKAILTVLSPNDRNSYNLERGDTIKLPAGTTSYLVNQDDEEDLRLVDLVIPVNGPGKFEAFDLAKNKNQYLRGFSKNILEASYNTRYETIEKVLLEEQEKDRKRRQQGEETDAIVKVS.

The N-terminal stretch at 1–29 (MATTIKSRFPLLLLLGIIFLASVVSVTYA) is a signal peptide. Residues 33–199 (EGSEPRVPAQ…EERSSESQER (167 aa)) are disordered. Composition is skewed to basic and acidic residues over residues 41 to 65 (AQRE…PSYE), 74 to 91 (QRER…RHGE), 104 to 144 (EKQK…RWER), and 153 to 186 (EEWR…HQRE). One can recognise a Cupin type-1 domain in the interval 202-359 (PFLFKSNKFL…SYNTRYETIE (158 aa)). The interval 367-386 (EKDRKRRQQGEETDAIVKVS) is disordered.

It belongs to the 7S seed storage protein family.

Its subcellular location is the vacuole. The protein localises to the aleurone grain. In terms of biological role, seed storage protein. In Pisum sativum (Garden pea), this protein is Convicilin (CVCB).